The following is a 120-amino-acid chain: Ribonuclease P protein component (120 aa).

This sequence belongs to the RnpA family. Consists of a catalytic RNA component (M1 or rnpB) and a protein subunit.

The enzyme catalyses Endonucleolytic cleavage of RNA, removing 5'-extranucleotides from tRNA precursor.. Its function is as follows. RNaseP catalyzes the removal of the 5'-leader sequence from pre-tRNA to produce the mature 5'-terminus. It can also cleave other RNA substrates such as 4.5S RNA. The protein component plays an auxiliary but essential role in vivo by binding to the 5'-leader sequence and broadening the substrate specificity of the ribozyme. This is Ribonuclease P protein component from Chlamydia trachomatis serovar L2 (strain ATCC VR-902B / DSM 19102 / 434/Bu).